A 138-amino-acid chain; its full sequence is uncharacterized protein (138 aa).

This is an uncharacterized protein from Schizosaccharomyces pombe (strain 972 / ATCC 24843) (Fission yeast).